Reading from the N-terminus, the 701-residue chain is Polyribonucleotide nucleotidyltransferase (701 aa).

Residues Asp485 and Asp491 each coordinate Mg(2+). Residues 552–611 (PKTQIMSINPDKIRDVIGAGGKVINKIIQDTGVKIDIKEDGTVFVSSTDHNGVNEAIKII) form the KH domain. The region spanning 621 to 689 (GEVYLGKVTK…NQGRINLSRK (69 aa)) is the S1 motif domain.

The protein belongs to the polyribonucleotide nucleotidyltransferase family. Mg(2+) serves as cofactor.

It is found in the cytoplasm. It catalyses the reaction RNA(n+1) + phosphate = RNA(n) + a ribonucleoside 5'-diphosphate. In terms of biological role, involved in mRNA degradation. Catalyzes the phosphorolysis of single-stranded polyribonucleotides processively in the 3'- to 5'-direction. This chain is Polyribonucleotide nucleotidyltransferase, found in Clostridium beijerinckii (strain ATCC 51743 / NCIMB 8052) (Clostridium acetobutylicum).